The following is a 678-amino-acid chain: Methionine--tRNA ligase (678 aa).

Positions Pro-12 to His-22 match the 'HIGH' region motif. The Zn(2+) site is built by Cys-143, Cys-146, Cys-156, and Cys-159. The short motif at Lys-328–Ser-332 is the 'KMSKS' region element. Lys-331 provides a ligand contact to ATP. In terms of domain architecture, tRNA-binding spans Asp-577–Lys-678.

Belongs to the class-I aminoacyl-tRNA synthetase family. MetG type 1 subfamily. In terms of assembly, homodimer. Zn(2+) is required as a cofactor.

The protein localises to the cytoplasm. The enzyme catalyses tRNA(Met) + L-methionine + ATP = L-methionyl-tRNA(Met) + AMP + diphosphate. Is required not only for elongation of protein synthesis but also for the initiation of all mRNA translation through initiator tRNA(fMet) aminoacylation. This Acidithiobacillus ferrooxidans (strain ATCC 23270 / DSM 14882 / CIP 104768 / NCIMB 8455) (Ferrobacillus ferrooxidans (strain ATCC 23270)) protein is Methionine--tRNA ligase.